The sequence spans 466 residues: Argininosuccinate lyase (466 aa).

It belongs to the lyase 1 family. Argininosuccinate lyase subfamily.

It is found in the cytoplasm. It catalyses the reaction 2-(N(omega)-L-arginino)succinate = fumarate + L-arginine. It functions in the pathway amino-acid biosynthesis; L-arginine biosynthesis; L-arginine from L-ornithine and carbamoyl phosphate: step 3/3. The protein is Argininosuccinate lyase of Roseobacter denitrificans (strain ATCC 33942 / OCh 114) (Erythrobacter sp. (strain OCh 114)).